Reading from the N-terminus, the 283-residue chain is Shikimate dehydrogenase (NADP(+)) (283 aa).

Residues 22-24 (SRS) and T69 contribute to the shikimate site. K73 acts as the Proton acceptor in catalysis. Shikimate is bound by residues N93 and D108. Residues 133–137 (GAGGS) and L222 contribute to the NADP(+) site. Y224 contributes to the shikimate binding site. NADP(+) is bound at residue G245.

It belongs to the shikimate dehydrogenase family. Homodimer.

The catalysed reaction is shikimate + NADP(+) = 3-dehydroshikimate + NADPH + H(+). It participates in metabolic intermediate biosynthesis; chorismate biosynthesis; chorismate from D-erythrose 4-phosphate and phosphoenolpyruvate: step 4/7. Involved in the biosynthesis of the chorismate, which leads to the biosynthesis of aromatic amino acids. Catalyzes the reversible NADPH linked reduction of 3-dehydroshikimate (DHSA) to yield shikimate (SA). The polypeptide is Shikimate dehydrogenase (NADP(+)) (Rhodopseudomonas palustris (strain BisB5)).